The chain runs to 214 residues: Small ribosomal subunit protein uS5 (214 aa).

The tract at residues 1-61 (MTDSSPQSNP…QERDSEWQER (61 aa)) is disordered. The span at 9–29 (NPNAVPGAADVPAAAEGQQQQ) shows a compositional bias: low complexity. Over residues 30 to 60 (EQRRGRGDRDGRRGDRRGGRRGQERDSEWQE) the composition is skewed to basic and acidic residues. The S5 DRBM domain maps to 58–121 (WQERVVQIRR…ADGKKHLVKV (64 aa)).

It belongs to the universal ribosomal protein uS5 family. Part of the 30S ribosomal subunit. Contacts proteins S4 and S8.

With S4 and S12 plays an important role in translational accuracy. In terms of biological role, located at the back of the 30S subunit body where it stabilizes the conformation of the head with respect to the body. In Synechococcus sp. (strain CC9605), this protein is Small ribosomal subunit protein uS5.